We begin with the raw amino-acid sequence, 77 residues long: uncharacterized protein (77 aa).

This is an uncharacterized protein from Rickettsia prowazekii (strain Madrid E).